The following is a 185-amino-acid chain: Threonylcarbamoyl-AMP synthase (185 aa).

The region spanning 4–185 (SWRVQQAARE…LATGEVVRPG (182 aa)) is the YrdC-like domain.

Belongs to the SUA5 family. TsaC subfamily.

The protein resides in the cytoplasm. The catalysed reaction is L-threonine + hydrogencarbonate + ATP = L-threonylcarbamoyladenylate + diphosphate + H2O. Functionally, required for the formation of a threonylcarbamoyl group on adenosine at position 37 (t(6)A37) in tRNAs that read codons beginning with adenine. Catalyzes the conversion of L-threonine, HCO(3)(-)/CO(2) and ATP to give threonylcarbamoyl-AMP (TC-AMP) as the acyladenylate intermediate, with the release of diphosphate. This is Threonylcarbamoyl-AMP synthase from Pseudomonas entomophila (strain L48).